The following is a 523-amino-acid chain: MKIGAPREIFEGEARVAMTPDSALQLQKLGHHCVIETGAGMKAGFSDEAYAAAGVEVLPSAAALFEAADIVVKVRGPERAEAERLRRGQTLISFFWPAQNAELLELCKEKGATVVAMDMVPRISRAQKMDALSSMANIAGYRAVIEAGNNFGRFFTGQVTAAGKVPPAKVLVVGAGVAGLAAIGTATSLGAITYAFDVRPEVAEQIESMGAEFVYLEFEEAQDGAATGGYAAPSSPEFREKQLAKFRELAPEMDIVITTALIPGRPAPKLWTEDMVSAMKRGSVIVDLASERGGNCDLTVPDQKIVTPNGVTIVGYTDFPSRMAAQASTLYSTNIRHMLTDLTPKKDGVIHHNMEDDVIRGATVTHDGAITFPPPPPKVAAIAAAKPREKVKELTPEEKRAAEIATFRKQTVSQVAMLAVGTALLLFVGMYAPPSFMAHFIVFALACFVGFQVIWNVSHSLHTPLMAVTNAISGIVILGALLQIGSGNVLVVLLAAISVLIATINIVGGFLVTRRMLAMFQKS.

At Met1–Thr411 the chain is on the cytoplasmic side. NAD(+) contacts are provided by residues Gln127–Asp130, Val177, Asp197–Arg199, and Gly229. 2 helical membrane passes run Val412 to Ala432 and Pro433 to Trp455. Residues Asn456–Pro464 are Cytoplasmic-facing. Residues Leu465–Gly485 form a helical membrane-spanning segment. Residues Ser486–Val489 are Periplasmic-facing. A helical membrane pass occupies residues Leu490–Phe510. Over Leu511 to Ser523 the chain is Cytoplasmic.

The protein belongs to the AlaDH/PNT family. In terms of assembly, heterodimer of an alpha (PntA) and a beta (PntB) chain.

Its subcellular location is the cell inner membrane. The catalysed reaction is NAD(+) + NADPH + H(+)(in) = NADH + NADP(+) + H(+)(out). The transhydrogenation between NADH and NADP is coupled to respiration and ATP hydrolysis and functions as a proton pump across the membrane. This chain is NAD(P) transhydrogenase subunit alpha, found in Cereibacter sphaeroides (Rhodobacter sphaeroides).